We begin with the raw amino-acid sequence, 380 residues long: Homoserine O-acetyltransferase (380 aa).

The region spanning 70–366 (NAVLVFHALT…SPHGHDAFLI (297 aa)) is the AB hydrolase-1 domain. Serine 186 serves as the catalytic Nucleophile. Arginine 250 is a binding site for substrate. Active-site residues include aspartate 333 and histidine 361. Aspartate 362 is a binding site for substrate.

The protein belongs to the AB hydrolase superfamily. MetX family. In terms of assembly, homodimer.

The protein resides in the cytoplasm. It catalyses the reaction L-homoserine + acetyl-CoA = O-acetyl-L-homoserine + CoA. Its pathway is amino-acid biosynthesis; L-methionine biosynthesis via de novo pathway; O-acetyl-L-homoserine from L-homoserine: step 1/1. In terms of biological role, transfers an acetyl group from acetyl-CoA to L-homoserine, forming acetyl-L-homoserine. In Thermus thermophilus (strain ATCC BAA-163 / DSM 7039 / HB27), this protein is Homoserine O-acetyltransferase.